The following is a 393-amino-acid chain: Acetate kinase (393 aa).

Asn-6 serves as a coordination point for Mg(2+). Lys-13 lines the ATP pocket. A substrate-binding site is contributed by Arg-87. Asp-143 (proton donor/acceptor) is an active-site residue. ATP-binding positions include 203–207 (HLGNG), 278–280 (DMR), and 326–330 (GIGEN). Residue Glu-380 participates in Mg(2+) binding.

The protein belongs to the acetokinase family. As to quaternary structure, homodimer. It depends on Mg(2+) as a cofactor. Mn(2+) serves as cofactor.

The protein resides in the cytoplasm. The enzyme catalyses acetate + ATP = acetyl phosphate + ADP. It functions in the pathway metabolic intermediate biosynthesis; acetyl-CoA biosynthesis; acetyl-CoA from acetate: step 1/2. Its function is as follows. Catalyzes the formation of acetyl phosphate from acetate and ATP. Can also catalyze the reverse reaction. In Mycoplasma capricolum subsp. capricolum (strain California kid / ATCC 27343 / NCTC 10154), this protein is Acetate kinase.